The chain runs to 157 residues: Small ribosomal subunit protein uS7 (157 aa).

The protein belongs to the universal ribosomal protein uS7 family. As to quaternary structure, part of the 30S ribosomal subunit. Contacts proteins S9 and S11.

One of the primary rRNA binding proteins, it binds directly to 16S rRNA where it nucleates assembly of the head domain of the 30S subunit. Is located at the subunit interface close to the decoding center, probably blocks exit of the E-site tRNA. This Chlamydia trachomatis serovar A (strain ATCC VR-571B / DSM 19440 / HAR-13) protein is Small ribosomal subunit protein uS7.